Here is a 410-residue protein sequence, read N- to C-terminus: Transcription termination factor, mitochondrial (410 aa).

A mitochondrion-targeting transit peptide spans methionine 1–leucine 44.

Belongs to the mTERF family.

Its subcellular location is the mitochondrion. In terms of biological role, transcription termination factor. Binds promoter DNA and regulates mitochondrial replication and transcription. Transcription termination activity may be polarized with highest termination activity occurring when its DNA-binding site is positioned in the reverse orientation with respect to the incoming RNA polymerase. Required for normal topology and maintenance of mitochondrial DNA (mtDNA) levels. Regulates mtDNA replication by promoting replication pausing, possibly by acting as a natural barrier to replication fork progression. Its function in replication pausing prevents unregulated replication that may occur for example by collisions between the machineries of DNA replication and transcription during mtDNA synthesis. This ensures the incorporation of RNA transcripts into replication intermediates at the replication fork and allow for proper fork progression. Shares mtDNA binding sites with the mitochondrial termination factor mTerf5 and thereby may antagonize mTerf5 function during replication to regulate pausing. Likely to function downstream of Dref which activates genes involved in mtDNA replication and maintenance. The protein is Transcription termination factor, mitochondrial of Drosophila melanogaster (Fruit fly).